The sequence spans 448 residues: tRNA methyltransferase 10 homolog C (448 aa).

The transit peptide at Met-1–Arg-48 directs the protein to the mitochondrion. Positions Arg-137–Glu-165 form a coiled coil. The segment at Arg-144–Lys-167 is disordered. The region spanning Gln-190–Gly-382 is the SAM-dependent MTase TRM10-type domain. The disordered stretch occupies residues Glu-429 to Asn-448.

This sequence belongs to the class IV-like SAM-binding methyltransferase superfamily. TRM10 family. Component of mitochondrial ribonuclease P. Interacts with HSD17B10/MRPP2.

The protein localises to the mitochondrion matrix. It localises to the mitochondrion nucleoid. The enzyme catalyses adenosine(9) in tRNA + S-adenosyl-L-methionine = N(1)-methyladenosine(9) in tRNA + S-adenosyl-L-homocysteine + H(+). The catalysed reaction is guanosine(9) in tRNA + S-adenosyl-L-methionine = N(1)-methylguanosine(9) in tRNA + S-adenosyl-L-homocysteine + H(+). It catalyses the reaction an adenosine in mRNA + S-adenosyl-L-methionine = an N(1)-methyladenosine in mRNA + S-adenosyl-L-homocysteine + H(+). Mitochondrial tRNA N(1)-methyltransferase involved in mitochondrial tRNA maturation. Component of mitochondrial ribonuclease P, which cleaves tRNA molecules in their 5'-ends. Together with hsd17b10/mrpp2, forms a subcomplex of the mitochondrial ribonuclease P, named MRPP1-MRPP2 subcomplex, which displays functions that are independent of the ribonuclease P activity. The MRPP1-MRPP2 subcomplex catalyzes the formation of N(1)-methylguanine and N(1)-methyladenine at position 9 (m1G9 and m1A9, respectively) in tRNAs; trmt10c/mrpp1 acting as the catalytic N(1)-methyltransferase subunit. The MRPP1-MRPP2 subcomplex also acts as a tRNA maturation platform: following 5'-end cleavage by the mitochondrial ribonuclease P complex, the MRPP1-MRPP2 subcomplex enhances the efficiency of 3'-processing catalyzed by ELAC2, retains the tRNA product after elac2 processing and presents the nascent tRNA to the mitochondrial CCA tRNA nucleotidyltransferase TRNT1 enzyme. In addition to tRNA N(1)-methyltransferase activity, trmt10c/mrpp1 also acts as a mRNA N(1)-methyltransferase by mediating methylation of adenosine residues at the N(1) position of MT-ND5 mRNA. This chain is tRNA methyltransferase 10 homolog C, found in Xenopus tropicalis (Western clawed frog).